The chain runs to 112 residues: Peptidyl-tRNA hydrolase (112 aa).

It belongs to the PTH2 family.

Its subcellular location is the cytoplasm. The enzyme catalyses an N-acyl-L-alpha-aminoacyl-tRNA + H2O = an N-acyl-L-amino acid + a tRNA + H(+). Its function is as follows. The natural substrate for this enzyme may be peptidyl-tRNAs which drop off the ribosome during protein synthesis. The chain is Peptidyl-tRNA hydrolase from Haloquadratum walsbyi (strain DSM 16790 / HBSQ001).